The following is a 618-amino-acid chain: Probable arginine--tRNA ligase, cytoplasmic (618 aa).

2 interaction with tRNA regions span residues 60 to 61 (ET) and 104 to 109 (NGIFLR). L-arginine is bound by residues 146 to 151 (EFSSPN), His-160, Tyr-359, Asp-363, and Gln-387. Residues 149-160 (SPNIAKPFHAGH) carry the 'HIGH' region motif. The segment at 496-510 (DTGPYLQYAHSRLSS) is interaction with tRNA.

This sequence belongs to the class-I aminoacyl-tRNA synthetase family.

The protein resides in the cytoplasm. It catalyses the reaction tRNA(Arg) + L-arginine + ATP = L-arginyl-tRNA(Arg) + AMP + diphosphate. Its function is as follows. Forms part of a macromolecular complex that catalyzes the attachment of specific amino acids to cognate tRNAs during protein synthesis. This is Probable arginine--tRNA ligase, cytoplasmic (mrs1) from Schizosaccharomyces pombe (strain 972 / ATCC 24843) (Fission yeast).